The following is a 96-amino-acid chain: Putative pterin-4-alpha-carbinolamine dehydratase (96 aa).

Belongs to the pterin-4-alpha-carbinolamine dehydratase family.

It catalyses the reaction (4aS,6R)-4a-hydroxy-L-erythro-5,6,7,8-tetrahydrobiopterin = (6R)-L-erythro-6,7-dihydrobiopterin + H2O. The protein is Putative pterin-4-alpha-carbinolamine dehydratase of Prochlorococcus marinus (strain MIT 9312).